Consider the following 213-residue polypeptide: Adenylate kinase (213 aa).

Residue 10 to 15 (GSGKGS) coordinates ATP. The interval 30–60 (STGNLFRAILKEDSELARKIKEINVSGGKLV) is NMP. Residues T31, R36, 58-60 (KLV), 87-90 (GYPR), and Q94 contribute to the AMP site. The tract at residues 123–160 (GRWMCPKCAGIYNIHFKKPQVDGVCDNDQATLYQRADD) is LID. ATP is bound at residue R124. Positions 127 and 130 each coordinate Zn(2+). 133–134 (IY) provides a ligand contact to ATP. Residues C147 and D150 each coordinate Zn(2+). 2 residues coordinate AMP: R157 and R168. Q196 contacts ATP.

This sequence belongs to the adenylate kinase family. As to quaternary structure, monomer.

Its subcellular location is the cytoplasm. The enzyme catalyses AMP + ATP = 2 ADP. Its pathway is purine metabolism; AMP biosynthesis via salvage pathway; AMP from ADP: step 1/1. Its function is as follows. Catalyzes the reversible transfer of the terminal phosphate group between ATP and AMP. Plays an important role in cellular energy homeostasis and in adenine nucleotide metabolism. In Ureaplasma urealyticum serovar 10 (strain ATCC 33699 / Western), this protein is Adenylate kinase.